Consider the following 190-residue polypeptide: Peptidyl-tRNA hydrolase (190 aa).

Tyrosine 14 contacts tRNA. The active-site Proton acceptor is the histidine 19. Positions 63, 65, and 112 each coordinate tRNA.

The protein belongs to the PTH family. In terms of assembly, monomer.

Its subcellular location is the cytoplasm. It carries out the reaction an N-acyl-L-alpha-aminoacyl-tRNA + H2O = an N-acyl-L-amino acid + a tRNA + H(+). Hydrolyzes ribosome-free peptidyl-tRNAs (with 1 or more amino acids incorporated), which drop off the ribosome during protein synthesis, or as a result of ribosome stalling. Its function is as follows. Catalyzes the release of premature peptidyl moieties from peptidyl-tRNA molecules trapped in stalled 50S ribosomal subunits, and thus maintains levels of free tRNAs and 50S ribosomes. The polypeptide is Peptidyl-tRNA hydrolase (Kosmotoga olearia (strain ATCC BAA-1733 / DSM 21960 / TBF 19.5.1)).